We begin with the raw amino-acid sequence, 221 residues long: MQDFAFAALSIWLCLGATALAESHGPQHCTSPNMTGVLTVMALTGGEIKATGHYSYDSTDKKLRFTESEMHLNKTEHLEDYLMLFEEGVFYDIDMKNQSCKKMSLHSHAHALELPAGAAHQVELFLGSDTVQEENIKVNIWMGSVAETKGQYSVLTTVGECLPLSTFYSTDSITLLFSNSEVVTEVKAPEMFTLPSFCEAVELEETPKGQKNDFFNIFNTV.

The signal sequence occupies residues 1-21; that stretch reads MQDFAFAALSIWLCLGATALA. N-linked (GlcNAc...) asparagine glycosylation is found at Asn-33, Asn-73, and Asn-97.

This sequence belongs to the ependymin family. Binds calcium through the terminal sialic acids. In terms of tissue distribution, EPDs are synthesized in the meninx and secreted in the cerebrospinal fluid.

The protein resides in the secreted. May play a role in neural plasticity. May be involved during axon regeneration. The sequence is that of Ependymin-2 (epd2) from Salmo salar (Atlantic salmon).